A 111-amino-acid polypeptide reads, in one-letter code: 2Fe-2S ferredoxin (111 aa).

One can recognise a 2Fe-2S ferredoxin-type domain in the interval 2 to 104; sequence PKIVILPHQD…DLVVEIPRYT (103 aa). Residues C42, C48, C51, and C87 each contribute to the [2Fe-2S] cluster site.

The protein belongs to the adrenodoxin/putidaredoxin family. Requires [2Fe-2S] cluster as cofactor.

Ferredoxin are iron-sulfur proteins that transfer electrons in a wide variety of metabolic reactions. Although the function of this ferredoxin is unknown it is probable that it has a role as a cellular electron transfer protein. Involved in the in vivo assembly of the Fe-S clusters in a wide variety of iron-sulfur proteins. The sequence is that of 2Fe-2S ferredoxin (fdx) from Escherichia coli O157:H7.